The primary structure comprises 227 residues: Superoxide dismutase [Cu-Zn] (227 aa).

A signal peptide spans methionine 1–alanine 19. A lipid anchor (N-palmitoyl cysteine) is attached at cysteine 20. Cysteine 20 carries S-diacylglycerol cysteine lipidation. The interval proline 23–alanine 55 is disordered. Low complexity predominate over residues glycine 39–alanine 55. Cu cation-binding residues include histidine 103 and histidine 105. An intrachain disulfide couples cysteine 110 to cysteine 221. Residue aspartate 145 participates in Zn(2+) binding. Histidine 182 lines the Cu cation pocket.

It belongs to the Cu-Zn superoxide dismutase family. Cu cation is required as a cofactor. The cofactor is Zn(2+).

The protein resides in the cell membrane. The catalysed reaction is 2 superoxide + 2 H(+) = H2O2 + O2. In terms of biological role, destroys radicals which are normally produced within the cells and which are toxic to biological systems. May play a role in favoring mycobacterial survival in phagocytes. The sequence is that of Superoxide dismutase [Cu-Zn] (sodC) from Mycolicibacterium paratuberculosis (strain ATCC BAA-968 / K-10) (Mycobacterium paratuberculosis).